The sequence spans 147 residues: Phospholipase A2-beta (147 aa).

The first 28 residues, 1-28, serve as a signal peptide directing secretion; that stretch reads MMFRTSLMRFAAAFFAIVFVVLVGVARS. 6 disulfides stabilise this stretch: Cys31–Cys58, Cys35–Cys64, Cys40–Cys117, Cys51–Cys71, Cys70–Cys95, and Cys77–Cys88. Residues Tyr50, Gly52, and His55 each contribute to the Ca(2+) site. His74 is a catalytic residue. Residue Asp75 coordinates Ca(2+). The Prevents secretion from ER motif lies at 144–147; the sequence is KTEL.

The protein belongs to the phospholipase A2 family. It depends on Ca(2+) as a cofactor. In terms of tissue distribution, ubiquitous but expressed at a low level. Detected in vascular tissues and in the guard cells. Predominantly detected in pollen.

The protein localises to the secreted. The protein resides in the endoplasmic reticulum. The catalysed reaction is a 1,2-diacyl-sn-glycero-3-phosphocholine + H2O = a 1-acyl-sn-glycero-3-phosphocholine + a fatty acid + H(+). Its activity is regulated as follows. Inhibited by aristolochic acid. Functionally, PA2 catalyzes the calcium-dependent hydrolysis of the 2-acyl groups in 3-sn-phosphoglycerides. Releases lysophospholipids (LPLs) and free fatty acids (FFAs) from membrane phospholipids in response to hormones and other external stimuli. Regulates the process of cell elongation and plays important roles in shoot gravitropism by mediating auxin-induced cell elongation. Involved in stomatal opening in response to light. Plays a role in pollen development and germination and tube growth. The chain is Phospholipase A2-beta (PLA2-BETA) from Arabidopsis thaliana (Mouse-ear cress).